The following is a 150-amino-acid chain: Large ribosomal subunit protein uL13 (150 aa).

This sequence belongs to the universal ribosomal protein uL13 family. As to quaternary structure, part of the 50S ribosomal subunit.

In terms of biological role, this protein is one of the early assembly proteins of the 50S ribosomal subunit, although it is not seen to bind rRNA by itself. It is important during the early stages of 50S assembly. This chain is Large ribosomal subunit protein uL13, found in Chlorobium phaeobacteroides (strain BS1).